A 68-amino-acid chain; its full sequence is U-poneritoxin(01)-Om4a (68 aa).

An N-terminal signal peptide occupies residues 1–25 (MKPSSLTLAFLVVFMMAIMYNSVQA). Residues 26-39 (EALADADAEAFAEA) constitute a propeptide that is removed on maturation.

It belongs to the formicidae venom precursor-01 superfamily. In terms of assembly, homo- or heterodimer with PLP7 (AC A0A348G6I9); disulfide-linked. Truncated sequences of this peptide have also been found in the venom. It is possible they have been cleaved in the venom. In terms of tissue distribution, expressed by the venom gland.

The protein resides in the secreted. In terms of biological role, this homodimer composed of two cationic amphipathic alpha-helical peptides has antimicrobial activities against E.coli (MIC=3.1 uM), S.aureus (MIC=3.1 uM), and S.cerevisiae (MIC=3.1 uM). It also shows histamine-releasing activity (66.4% at 10 uM) and a weak hemolytic activity (10.5% at 50 uM). The chain is U-poneritoxin(01)-Om4a from Odontomachus monticola (Trap-jaw ant).